Reading from the N-terminus, the 188-residue chain is Probable RNA 2'-phosphotransferase (188 aa).

The protein belongs to the KptA/TPT1 family.

Removes the 2'-phosphate from RNA via an intermediate in which the phosphate is ADP-ribosylated by NAD followed by a presumed transesterification to release the RNA and generate ADP-ribose 1''-2''-cyclic phosphate (APPR&gt;P). May function as an ADP-ribosylase. The polypeptide is Probable RNA 2'-phosphotransferase (Lacticaseibacillus paracasei (strain ATCC 334 / BCRC 17002 / CCUG 31169 / CIP 107868 / KCTC 3260 / NRRL B-441) (Lactobacillus paracasei)).